A 99-amino-acid polypeptide reads, in one-letter code: Protein Tat (99 aa).

An interaction with human CREBBP region spans residues 1 to 24 (MDPVDPKLEPWNHPGSQPQTACNN). The segment at 1 to 48 (MDPVDPKLEPWNHPGSQPQTACNNCYCKKCCYHCQMCFLKKGLGISYG) is transactivation. The Zn(2+) site is built by Cys-22, Cys-25, and Cys-27. Residues 22 to 37 (CNNCYCKKCCYHCQMC) are cysteine-rich. Lys-28 bears the N6-acetyllysine; by host PCAF mark. 4 residues coordinate Zn(2+): Cys-30, His-33, Cys-34, and Cys-37. Residues 38–48 (FLKKGLGISYG) are core. The segment covering 48–58 (GRKKRSQRHRT) has biased composition (basic residues). Residues 48 to 99 (GRKKRSQRHRTPASLQDHQNSISKQPLSRTHGDPTGPKEQKKEVASKTETDP) are disordered. The short motif at 49–57 (RKKRSQRHR) is the Nuclear localization signal, RNA-binding (TAR), and protein transduction element. Residues 49-86 (RKKRSQRHRTPASLQDHQNSISKQPLSRTHGDPTGPKE) form an interaction with the host capping enzyme RNGTT region. N6-acetyllysine; by host EP300 and GCN5L2 occurs at positions 50 and 51. Position 52 is an asymmetric dimethylarginine; by host PRMT6 (Arg-52). Residues 60-75 (ASLQDHQNSISKQPLS) show a composition bias toward polar residues. Lys-71 participates in a covalent cross-link: Glycyl lysine isopeptide (Lys-Gly) (interchain with G-Cter in ubiquitin). Residues 77-99 (THGDPTGPKEQKKEVASKTETDP) show a composition bias toward basic and acidic residues.

Belongs to the lentiviruses Tat family. As to quaternary structure, interacts with host CCNT1. Associates with the P-TEFb complex composed at least of Tat, P-TEFb (CDK9 and CCNT1), TAR RNA, RNA Pol II. Recruits the HATs CREBBP, TAF1/TFIID, EP300, PCAF and GCN5L2. Interacts with host KAT5/Tip60; this interaction targets the latter to degradation. Interacts with the host deacetylase SIRT1. Interacts with host capping enzyme RNGTT; this interaction stimulates RNGTT. Binds to host KDR, and to the host integrins ITGAV/ITGB3 and ITGA5/ITGB1. Interacts with host KPNB1/importin beta-1 without previous binding to KPNA1/importin alpha-1. Interacts with EIF2AK2. Interacts with host nucleosome assembly protein NAP1L1; this interaction may be required for the transport of Tat within the nucleus, since the two proteins interact at the nuclear rim. Interacts with host C1QBP/SF2P32; this interaction involves lysine-acetylated Tat. Interacts with the host chemokine receptors CCR2, CCR3 and CXCR4. Interacts with host DPP4/CD26; this interaction may trigger an anti-proliferative effect. Interacts with host LDLR. Interacts with the host extracellular matrix metalloproteinase MMP1. Interacts with host PRMT6; this interaction mediates Tat's methylation. Interacts with, and is ubiquitinated by MDM2/Hdm2. Interacts with host PSMC3 and HTATIP2. Interacts with STAB1; this interaction may overcome SATB1-mediated repression of IL2 and IL2RA (interleukin) in T cells by binding to the same domain than HDAC1. Interacts (when acetylated) with human CDK13, thereby increasing HIV-1 mRNA splicing and promoting the production of the doubly spliced HIV-1 protein Nef. Interacts with host TBP; this interaction modulates the activity of transcriptional pre-initiation complex. Interacts with host RELA. Interacts with host PLSCR1; this interaction negatively regulates Tat transactivation activity by altering its subcellular distribution. In terms of processing, asymmetrical arginine methylation by host PRMT6 seems to diminish the transactivation capacity of Tat and affects the interaction with host CCNT1. Post-translationally, acetylation by EP300, CREBBP, GCN5L2/GCN5 and PCAF regulates the transactivation activity of Tat. EP300-mediated acetylation of Lys-50 promotes dissociation of Tat from the TAR RNA through the competitive binding to PCAF's bromodomain. In addition, the non-acetylated Tat's N-terminus can also interact with PCAF. PCAF-mediated acetylation of Lys-28 enhances Tat's binding to CCNT1. Lys-50 is deacetylated by SIRT1. Polyubiquitination by host MDM2 does not target Tat to degradation, but activates its transactivation function and fosters interaction with CCNT1 and TAR RNA. In terms of processing, phosphorylated by EIF2AK2 on serine and threonine residues adjacent to the basic region important for TAR RNA binding and function. Phosphorylation of Tat by EIF2AK2 is dependent on the prior activation of EIF2AK2 by dsRNA.

The protein localises to the host nucleus. It is found in the host nucleolus. Its subcellular location is the host cytoplasm. It localises to the secreted. In terms of biological role, transcriptional activator that increases RNA Pol II processivity, thereby increasing the level of full-length viral transcripts. Recognizes a hairpin structure at the 5'-LTR of the nascent viral mRNAs referred to as the transactivation responsive RNA element (TAR) and recruits the cyclin T1-CDK9 complex (P-TEFb complex) that will in turn hyperphosphorylate the RNA polymerase II to allow efficient elongation. The CDK9 component of P-TEFb and other Tat-activated kinases hyperphosphorylate the C-terminus of RNA Pol II that becomes stabilized and much more processive. Other factors such as HTATSF1/Tat-SF1, SUPT5H/SPT5, and HTATIP2 are also important for Tat's function. Besides its effect on RNA Pol II processivity, Tat induces chromatin remodeling of proviral genes by recruiting the histone acetyltransferases (HATs) CREBBP, EP300 and PCAF to the chromatin. This also contributes to the increase in proviral transcription rate, especially when the provirus integrates in transcriptionally silent region of the host genome. To ensure maximal activation of the LTR, Tat mediates nuclear translocation of NF-kappa-B by interacting with host RELA. Through its interaction with host TBP, Tat may also modulate transcription initiation. Tat can reactivate a latently infected cell by penetrating in it and transactivating its LTR promoter. In the cytoplasm, Tat is thought to act as a translational activator of HIV-1 mRNAs. Extracellular circulating Tat can be endocytosed by surrounding uninfected cells via the binding to several surface receptors such as CD26, CXCR4, heparan sulfate proteoglycans (HSPG) or LDLR. Neurons are rarely infected, but they internalize Tat via their LDLR. Through its interaction with nuclear HATs, Tat is potentially able to control the acetylation-dependent cellular gene expression. Modulates the expression of many cellular genes involved in cell survival, proliferation or in coding for cytokines or cytokine receptors. Tat plays a role in T-cell and neurons apoptosis. Tat induced neurotoxicity and apoptosis probably contribute to neuroAIDS. Circulating Tat also acts as a chemokine-like and/or growth factor-like molecule that binds to specific receptors on the surface of the cells, affecting many cellular pathways. In the vascular system, Tat binds to ITGAV/ITGB3 and ITGA5/ITGB1 integrins dimers at the surface of endothelial cells and competes with bFGF for heparin-binding sites, leading to an excess of soluble bFGF. This chain is Protein Tat, found in Homo sapiens (Human).